We begin with the raw amino-acid sequence, 99 residues long: Photosystem II reaction center Psb28 protein (99 aa).

This sequence belongs to the Psb28 family. Part of the photosystem II complex.

It localises to the cell inner membrane. This chain is Photosystem II reaction center Psb28 protein, found in Gloeobacter violaceus (strain ATCC 29082 / PCC 7421).